The sequence spans 165 residues: Nucleotide-binding protein PMN2A_1813 (165 aa).

The protein belongs to the YajQ family.

Nucleotide-binding protein. The protein is Nucleotide-binding protein PMN2A_1813 of Prochlorococcus marinus (strain NATL2A).